Here is a 270-residue protein sequence, read N- to C-terminus: Protein N-terminal and lysine N-methyltransferase EFM7 (270 aa).

Residues 1 to 45 form a disordered region; that stretch reads MSDIESLNGGDLFAEPSDFYKPPPEPHFATYTRDDVPESSTSQQK. S-adenosyl-L-methionine is bound by residues Trp-63, 89-91, Asp-111, Trp-158, and Ser-182; that span reads GAA.

The protein belongs to the class I-like SAM-binding methyltransferase superfamily. EFM7 family.

Its subcellular location is the cytoplasm. S-adenosyl-L-methionine-dependent protein methyltransferase that trimethylates the N-terminal glycine 'Gly-2' of elongation factor 1-alpha, before also catalyzing the mono- and dimethylation of 'Lys-3'. The sequence is that of Protein N-terminal and lysine N-methyltransferase EFM7 from Kluyveromyces lactis (strain ATCC 8585 / CBS 2359 / DSM 70799 / NBRC 1267 / NRRL Y-1140 / WM37) (Yeast).